We begin with the raw amino-acid sequence, 118 residues long: Large ribosomal subunit protein bL20 (118 aa).

This sequence belongs to the bacterial ribosomal protein bL20 family.

Binds directly to 23S ribosomal RNA and is necessary for the in vitro assembly process of the 50S ribosomal subunit. It is not involved in the protein synthesizing functions of that subunit. The sequence is that of Large ribosomal subunit protein bL20 (rplT) from Thermotoga maritima (strain ATCC 43589 / DSM 3109 / JCM 10099 / NBRC 100826 / MSB8).